We begin with the raw amino-acid sequence, 199 residues long: MSVEPVVVIDGKGHLVGRLASVVAKQLLNGQKIVVVRAEELNISGEFFRNKLKYHDFLRKATAFNKTRGPFHFRAPSRIFYKALRGMVSHKTARGKAALERLKVFEGIPPPYDKKKRVVVPQALRVLRLKPGRKYTTLGKLSTSVGWKYEDVVAKLEAKRKVSSAEYYAKKRAFTKKVASANATAAESDVAKQLAALGY.

Ser2 is modified (N-acetylserine). Lys177 participates in a covalent cross-link: Glycyl lysine isopeptide (Lys-Gly) (interchain with G-Cter in ubiquitin).

This sequence belongs to the universal ribosomal protein uL13 family. As to quaternary structure, component of the large ribosomal subunit (LSU). Mature yeast ribosomes consist of a small (40S) and a large (60S) subunit. The 40S small subunit contains 1 molecule of ribosomal RNA (18S rRNA) and 33 different proteins (encoded by 57 genes). The large 60S subunit contains 3 rRNA molecules (25S, 5.8S and 5S rRNA) and 46 different proteins (encoded by 81 genes). N-terminally acetylated by acetyltransferase NatA.

It localises to the cytoplasm. Its function is as follows. Component of the ribosome, a large ribonucleoprotein complex responsible for the synthesis of proteins in the cell. The small ribosomal subunit (SSU) binds messenger RNAs (mRNAs) and translates the encoded message by selecting cognate aminoacyl-transfer RNA (tRNA) molecules. The large subunit (LSU) contains the ribosomal catalytic site termed the peptidyl transferase center (PTC), which catalyzes the formation of peptide bonds, thereby polymerizing the amino acids delivered by tRNAs into a polypeptide chain. The nascent polypeptides leave the ribosome through a tunnel in the LSU and interact with protein factors that function in enzymatic processing, targeting, and the membrane insertion of nascent chains at the exit of the ribosomal tunnel. This Saccharomyces cerevisiae (strain ATCC 204508 / S288c) (Baker's yeast) protein is Large ribosomal subunit protein uL13A.